We begin with the raw amino-acid sequence, 94 residues long: Cell division protein FtsB (94 aa).

The Cytoplasmic portion of the chain corresponds to 1–3; sequence MRA. Residues 4-21 form a helical membrane-spanning segment; it reads FAVLLIIALGWLQYTLWF. At 22–94 the chain is on the periplasmic side; it reads GKNGMEDYAQ…YRIIDENSEE (73 aa). Residues 40–60 are a coiled coil; sequence EEVNQGLRNRNGQMFAEIDDL.

It belongs to the FtsB family. Part of a complex composed of FtsB, FtsL and FtsQ.

It localises to the cell inner membrane. In terms of biological role, essential cell division protein. May link together the upstream cell division proteins, which are predominantly cytoplasmic, with the downstream cell division proteins, which are predominantly periplasmic. In Aliivibrio salmonicida (strain LFI1238) (Vibrio salmonicida (strain LFI1238)), this protein is Cell division protein FtsB.